Here is a 497-residue protein sequence, read N- to C-terminus: Acetyl-coenzyme A carboxylase carboxyl transferase subunit beta, chloroplastic (497 aa).

The CoA carboxyltransferase N-terminal domain occupies 230–497; that stretch reads LWVQCENCYG…FFPLNQNSIK (268 aa). C234, C237, C253, and C256 together coordinate Zn(2+). Residues 234-256 form a C4-type zinc finger; that stretch reads CENCYGLNYKKFLKSKMNICEQC.

The protein belongs to the AccD/PCCB family. As to quaternary structure, acetyl-CoA carboxylase is a heterohexamer composed of biotin carboxyl carrier protein, biotin carboxylase and 2 subunits each of ACCase subunit alpha and ACCase plastid-coded subunit beta (accD). Requires Zn(2+) as cofactor.

The protein localises to the plastid. The protein resides in the chloroplast stroma. The enzyme catalyses N(6)-carboxybiotinyl-L-lysyl-[protein] + acetyl-CoA = N(6)-biotinyl-L-lysyl-[protein] + malonyl-CoA. The protein operates within lipid metabolism; malonyl-CoA biosynthesis; malonyl-CoA from acetyl-CoA: step 1/1. Functionally, component of the acetyl coenzyme A carboxylase (ACC) complex. Biotin carboxylase (BC) catalyzes the carboxylation of biotin on its carrier protein (BCCP) and then the CO(2) group is transferred by the transcarboxylase to acetyl-CoA to form malonyl-CoA. The sequence is that of Acetyl-coenzyme A carboxylase carboxyl transferase subunit beta, chloroplastic from Carica papaya (Papaya).